The chain runs to 312 residues: Acetyl-coenzyme A carboxylase carboxyl transferase subunit beta (312 aa).

The interval methionine 1–proline 52 is disordered. Residues proline 18–threonine 32 show a composition bias toward low complexity. A CoA carboxyltransferase N-terminal domain is found at valine 55 to lysine 312. Zn(2+)-binding residues include cysteine 59, cysteine 62, cysteine 78, and cysteine 81. Residues cysteine 59–cysteine 81 form a C4-type zinc finger.

The protein belongs to the AccD/PCCB family. Acetyl-CoA carboxylase is a heterohexamer composed of biotin carboxyl carrier protein (AccB), biotin carboxylase (AccC) and two subunits each of ACCase subunit alpha (AccA) and ACCase subunit beta (AccD). It depends on Zn(2+) as a cofactor.

The protein localises to the cytoplasm. It catalyses the reaction N(6)-carboxybiotinyl-L-lysyl-[protein] + acetyl-CoA = N(6)-biotinyl-L-lysyl-[protein] + malonyl-CoA. The protein operates within lipid metabolism; malonyl-CoA biosynthesis; malonyl-CoA from acetyl-CoA: step 1/1. In terms of biological role, component of the acetyl coenzyme A carboxylase (ACC) complex. Biotin carboxylase (BC) catalyzes the carboxylation of biotin on its carrier protein (BCCP) and then the CO(2) group is transferred by the transcarboxylase to acetyl-CoA to form malonyl-CoA. In Rhodopirellula baltica (strain DSM 10527 / NCIMB 13988 / SH1), this protein is Acetyl-coenzyme A carboxylase carboxyl transferase subunit beta.